The following is a 793-amino-acid chain: Endonuclease MutS2 (793 aa).

335–342 (GPNTGGKT) lines the ATP pocket. Residues 718-793 (IDVRGYNLEE…ESGVTIVELR (76 aa)) enclose the Smr domain.

The protein belongs to the DNA mismatch repair MutS family. MutS2 subfamily. Homodimer. Binds to stalled ribosomes, contacting rRNA.

Functionally, endonuclease that is involved in the suppression of homologous recombination and thus may have a key role in the control of bacterial genetic diversity. In terms of biological role, acts as a ribosome collision sensor, splitting the ribosome into its 2 subunits. Detects stalled/collided 70S ribosomes which it binds and splits by an ATP-hydrolysis driven conformational change. Acts upstream of the ribosome quality control system (RQC), a ribosome-associated complex that mediates the extraction of incompletely synthesized nascent chains from stalled ribosomes and their subsequent degradation. Probably generates substrates for RQC. This chain is Endonuclease MutS2, found in Acetivibrio thermocellus (strain ATCC 27405 / DSM 1237 / JCM 9322 / NBRC 103400 / NCIMB 10682 / NRRL B-4536 / VPI 7372) (Clostridium thermocellum).